We begin with the raw amino-acid sequence, 487 residues long: Putative beta-glucosidase 35 (487 aa).

The signal sequence occupies residues 1 to 27; it reads MGIRMGRRLLLITLLLGALLCNNVAYA. Residue Gln48 coordinates a beta-D-glucoside. N-linked (GlcNAc...) asparagine glycans are attached at residues Asn76 and Asn116. A beta-D-glucoside is bound by residues His151 and 200–201; that span reads NE. The active-site Proton donor is the Glu201. Cys220 and Cys228 form a disulfide bridge. Tyr344 is a binding site for a beta-D-glucoside. N-linked (GlcNAc...) asparagine glycosylation is present at Asn369. Glu414 is an a beta-D-glucoside binding site. Glu414 (nucleophile) is an active-site residue. N-linked (GlcNAc...) asparagine glycosylation is found at Asn418 and Asn419. Residue Phe458 coordinates a beta-D-glucoside.

This sequence belongs to the glycosyl hydrolase 1 family.

It catalyses the reaction Hydrolysis of terminal, non-reducing beta-D-glucosyl residues with release of beta-D-glucose.. This Oryza sativa subsp. japonica (Rice) protein is Putative beta-glucosidase 35 (BGLU35).